The chain runs to 465 residues: MAELPLAAGLLDLRPCKLAPPPPPPLPVSPSPRHHRRPHSTATACRAAPDLHSSTELADGSIVFRFARPRDDDDEEQQQRRADAVAPEAAAVVESGLDGDAAAAAEPEARDGGGEGEVTATATGLDAEEVVASGGAEATATSGLEDAGEEASDGSTARDSDTDVDTESSASTAADDDQPAEFAVPPPPAEEVCNKVDWEKDTSEVKNTDRMVPVASSTLVLASGAAILPHPSKAATGGEDAYFIACDGWFGVADGVGQWSFEGINAGLYARELMDGCKKFIMENQGAADIKPEQVLSKAADEAHSPGSSTVLVAHFDGQFLNASNIGDSGFLVIRNGEVYQKSKPMVYGFNFPLQIEKGDNPLKLVQNYTIELEDGDVIVTASDGLFDNVYEQEVATMVSKSLQADLKPTEIAEHLAAKAQEVGRSAAGSTPFSDAALAVGYLGFSGGKLDDIAVVVSIVRKSEI.

Disordered regions lie at residues 14-47, 68-119, and 133-191; these read RPCK…ACRA, RPRD…GEVT, and SGGA…PAEE. Over residues 18-30 the composition is skewed to pro residues; the sequence is LAPPPPPPLPVSP. 2 stretches are compositionally biased toward low complexity: residues 84–106 and 133–143; these read AVAP…AAAE and SGGAEATATSG. One can recognise a PPM-type phosphatase domain in the interval 222 to 460; that stretch reads ASGAAILPHP…DDIAVVVSIV (239 aa). Mn(2+) contacts are provided by D254, G255, D384, and D451.

Belongs to the PP2C family. Requires Mg(2+) as cofactor. Mn(2+) is required as a cofactor.

It carries out the reaction O-phospho-L-seryl-[protein] + H2O = L-seryl-[protein] + phosphate. The catalysed reaction is O-phospho-L-threonyl-[protein] + H2O = L-threonyl-[protein] + phosphate. The chain is Probable protein phosphatase 2C 71 from Oryza sativa subsp. japonica (Rice).